Here is a 199-residue protein sequence, read N- to C-terminus: ATP-dependent Clp protease proteolytic subunit (199 aa).

The active-site Nucleophile is the Ser97. Residue His122 is part of the active site.

The protein belongs to the peptidase S14 family. Fourteen ClpP subunits assemble into 2 heptameric rings which stack back to back to give a disk-like structure with a central cavity, resembling the structure of eukaryotic proteasomes.

It localises to the cytoplasm. It carries out the reaction Hydrolysis of proteins to small peptides in the presence of ATP and magnesium. alpha-casein is the usual test substrate. In the absence of ATP, only oligopeptides shorter than five residues are hydrolyzed (such as succinyl-Leu-Tyr-|-NHMec, and Leu-Tyr-Leu-|-Tyr-Trp, in which cleavage of the -Tyr-|-Leu- and -Tyr-|-Trp bonds also occurs).. Cleaves peptides in various proteins in a process that requires ATP hydrolysis. Has a chymotrypsin-like activity. Plays a major role in the degradation of misfolded proteins. The sequence is that of ATP-dependent Clp protease proteolytic subunit from Geobacter metallireducens (strain ATCC 53774 / DSM 7210 / GS-15).